Here is a 124-residue protein sequence, read N- to C-terminus: Large ribosomal subunit protein bL12 (124 aa).

Belongs to the bacterial ribosomal protein bL12 family. As to quaternary structure, homodimer. Part of the ribosomal stalk of the 50S ribosomal subunit. Forms a multimeric L10(L12)X complex, where L10 forms an elongated spine to which 2 to 4 L12 dimers bind in a sequential fashion. Binds GTP-bound translation factors.

Its function is as follows. Forms part of the ribosomal stalk which helps the ribosome interact with GTP-bound translation factors. Is thus essential for accurate translation. The chain is Large ribosomal subunit protein bL12 from Desulfitobacterium hafniense (strain DSM 10664 / DCB-2).